We begin with the raw amino-acid sequence, 238 residues long: Probable transcriptional regulatory protein SAB0618 (238 aa).

This sequence belongs to the TACO1 family. YeeN subfamily.

Its subcellular location is the cytoplasm. The polypeptide is Probable transcriptional regulatory protein SAB0618 (Staphylococcus aureus (strain bovine RF122 / ET3-1)).